The sequence spans 309 residues: Formimidoylglutamase (309 aa).

Mn(2+)-binding residues include His-120, Asp-145, His-147, Asp-149, Asp-236, and Asp-238.

This sequence belongs to the arginase family. Mn(2+) is required as a cofactor.

It catalyses the reaction N-formimidoyl-L-glutamate + H2O = formamide + L-glutamate. The protein operates within amino-acid degradation; L-histidine degradation into L-glutamate; L-glutamate from N-formimidoyl-L-glutamate (hydrolase route): step 1/1. In terms of biological role, catalyzes the conversion of N-formimidoyl-L-glutamate to L-glutamate and formamide. In Chromobacterium violaceum (strain ATCC 12472 / DSM 30191 / JCM 1249 / CCUG 213 / NBRC 12614 / NCIMB 9131 / NCTC 9757 / MK), this protein is Formimidoylglutamase.